A 283-amino-acid chain; its full sequence is Zinc finger protein 691 (283 aa).

Residues 1–41 (MGSEKEQRPEAHLPEEGEGAKPWRVDGSKDSQITPREDHGQ) are compositionally biased toward basic and acidic residues. The segment at 1 to 68 (MGSEKEQRPE…KVTAQAGGPG (68 aa)) is disordered. Position 43 is a phosphoserine (S43). K81 is covalently cross-linked (Glycyl lysine isopeptide (Lys-Gly) (interchain with G-Cter in SUMO2)). C2H2-type zinc fingers lie at residues 83-105 (FICA…QRIH), 111-133 (YKCS…ERIH), 139-161 (YQCA…QQDH), 167-189 (YRCD…HRTH), 195-217 (YICC…HRTH), 223-245 (YECT…QRTH), and 251-273 (YRCT…QKTH).

It belongs to the krueppel C2H2-type zinc-finger protein family.

The protein resides in the nucleus. Its function is as follows. May be involved in transcriptional regulation. This Mus musculus (Mouse) protein is Zinc finger protein 691 (Znf691).